A 247-amino-acid chain; its full sequence is 5-oxoprolinase subunit A (247 aa).

It belongs to the LamB/PxpA family. In terms of assembly, forms a complex composed of PxpA, PxpB and PxpC.

The catalysed reaction is 5-oxo-L-proline + ATP + 2 H2O = L-glutamate + ADP + phosphate + H(+). Functionally, catalyzes the cleavage of 5-oxoproline to form L-glutamate coupled to the hydrolysis of ATP to ADP and inorganic phosphate. The protein is 5-oxoprolinase subunit A of Vibrio vulnificus (strain YJ016).